The sequence spans 547 residues: MATKLIKHGSKAREQMLEGIDILADAVKVTLGPKGRNVLIEQSFGSPKITKDGVTVAKSIELKDKIRNAGAQLLKSAATKAAEVAGDGTTTATVLARALAREGNKLVAAGYNPMDLKRGMDLAVNAVVEEIKKSSKKINSQEEIAQVGTISSNGDKEIGEKIAKAMEEVGKEGVITVEEAKNFSFDVEVVKGMMFDRGYLSPYFVTNSEKMVAELENPFILLFEKKLSNLQPMLPILEAVVQSQRPLLIIAEDVEGEALATLVVNRLRGGLKVAAVKAPGFGDRRKAMMEDIAILTKGELITEDLGMKLENVSIKSLGTAKRVTISKENTVIVDGNGDKKNIEDRVLQIKSQIAETTSDYDKEKLQERLAKLSGGVAVLKVGGATEVEVKERKDRVEDALAATRAAVEEGVVAGGGVTLLHASQPLTKLKVENKDQQAGIEIVIEALKDPLKQIVENAGENGGVVVGKLLEHKDKNYGFNAQDMQYVDMIKAGIIDPAKVVRTALQDATSVASLIITTETLIVDEPSDKAEPMPMRGGMGGMGGMDF.

ATP-binding positions include 30-33, Lys-51, 87-91, Gly-415, and Asp-496; these read TLGP and DGTTT. The interval 527-547 is disordered; it reads SDKAEPMPMRGGMGGMGGMDF. The span at 537 to 547 shows a compositional bias: gly residues; it reads GGMGGMGGMDF.

This sequence belongs to the chaperonin (HSP60) family. Forms a cylinder of 14 subunits composed of two heptameric rings stacked back-to-back. Interacts with the co-chaperonin GroES.

It is found in the cytoplasm. It catalyses the reaction ATP + H2O + a folded polypeptide = ADP + phosphate + an unfolded polypeptide.. Functionally, together with its co-chaperonin GroES, plays an essential role in assisting protein folding. The GroEL-GroES system forms a nano-cage that allows encapsulation of the non-native substrate proteins and provides a physical environment optimized to promote and accelerate protein folding. The chain is Chaperonin GroEL from Rickettsia africae (strain ESF-5).